Reading from the N-terminus, the 202-residue chain is dITP/XTP pyrophosphatase (202 aa).

Residue 10 to 15 participates in substrate binding; sequence TSNRHK. The Proton acceptor role is filled by aspartate 70. Aspartate 70 serves as a coordination point for Mg(2+). Residues serine 71, 153-156, lysine 176, and 181-182 contribute to the substrate site; these read FGYD and HR.

This sequence belongs to the HAM1 NTPase family. Homodimer. The cofactor is Mg(2+).

The enzyme catalyses XTP + H2O = XMP + diphosphate + H(+). It catalyses the reaction dITP + H2O = dIMP + diphosphate + H(+). It carries out the reaction ITP + H2O = IMP + diphosphate + H(+). Functionally, pyrophosphatase that catalyzes the hydrolysis of nucleoside triphosphates to their monophosphate derivatives, with a high preference for the non-canonical purine nucleotides XTP (xanthosine triphosphate), dITP (deoxyinosine triphosphate) and ITP. Seems to function as a house-cleaning enzyme that removes non-canonical purine nucleotides from the nucleotide pool, thus preventing their incorporation into DNA/RNA and avoiding chromosomal lesions. This Methylacidiphilum infernorum (isolate V4) (Methylokorus infernorum (strain V4)) protein is dITP/XTP pyrophosphatase.